The following is a 344-amino-acid chain: Aurora kinase B (344 aa).

The tract at residues 1-22 is disordered; it reads MAQKENSYPWPYGRQTAPSGLS. Threonine 35 carries the phosphothreonine modification. Residue serine 62 is modified to Phosphoserine. Phosphothreonine is present on threonine 64. Residues 77–327 enclose the Protein kinase domain; it reads FEIGRPLGKG…LAQVSAHPWV (251 aa). Residues 83–91 and lysine 106 contribute to the ATP site; that span reads LGKGKFGNV. Aspartate 200 acts as the Proton acceptor in catalysis. Position 215 is an N6-acetyllysine (lysine 215). Serine 227 carries the post-translational modification Phosphoserine. At threonine 232 the chain carries Phosphothreonine; by autocatalysis.

Belongs to the protein kinase superfamily. Ser/Thr protein kinase family. Aurora subfamily. As to quaternary structure, component of the chromosomal passenger complex (CPC) composed of at least BIRC5/survivin, CDCA8/borealin, INCENP, AURKB or AURKC; predominantly independent AURKB- and AURKC-containing complexes exist. Associates with RACGAP1 during M phase. Interacts with SPDYC; this interaction may be required for proper localization of active, Thr-232-phosphorylated AURKB form during prometaphase and metaphase. Interacts with p53/TP53. Interacts (via the middle kinase domain) with NOC2L (via the N- and C-terminus domains). Interacts with CDCA1. Interacts with EVI5. Interacts with JTB. Interacts with NDC80. Interacts with PSMA3. Interacts with RNF2/RING1B. Interacts with SEPTIN1. Interacts with SIRT2. Interacts with TACC1. Interacts with TTC28. Post-translationally, the phosphorylation of Thr-232 requires the binding to INCENP and occurs by means of an autophosphorylation mechanism. Thr-232 phosphorylation is indispensable for the AURKB kinase activity. In terms of processing, acetylated at Lys-215 by KAT5 at kinetochores, increasing AURKB activity and promoting accurate chromosome segregation in mitosis. Ubiquitinated by different BCR (BTB-CUL3-RBX1) E3 ubiquitin ligase complexes. Ubiquitinated by the BCR(KLHL9-KLHL13) E3 ubiquitin ligase complex, ubiquitination leads to removal from mitotic chromosomes and is required for cytokinesis. During anaphase, the BCR(KLHL21) E3 ubiquitin ligase complex recruits the CPC complex from chromosomes to the spindle midzone and mediates the ubiquitination of AURKB. Ubiquitination of AURKB by BCR(KLHL21) E3 ubiquitin ligase complex may not lead to its degradation by the proteasome. Deubiquitinated by USP35; inhibiting CDH1-mediated degradation of AURKB. In terms of tissue distribution, high level expression seen in the thymus. It is also expressed in the spleen, lung, testis, colon, placenta and fetal liver. Expressed during S and G2/M phase and expression is up-regulated in cancer cells during M phase. As to expression, not expressed in normal liver, high expression in metastatic liver.

The protein localises to the nucleus. It localises to the chromosome. The protein resides in the centromere. Its subcellular location is the kinetochore. It is found in the cytoplasm. The protein localises to the cytoskeleton. It localises to the spindle. The protein resides in the midbody. The enzyme catalyses L-seryl-[protein] + ATP = O-phospho-L-seryl-[protein] + ADP + H(+). It catalyses the reaction L-threonyl-[protein] + ATP = O-phospho-L-threonyl-[protein] + ADP + H(+). With respect to regulation, activity is greatly increased when AURKB is within the CPC complex. In particular, AURKB-phosphorylated INCENP acts as an activator of AURKB. Positive feedback between HASPIN and AURKB contributes to CPC localization. Inhibited by ZM447439. In terms of biological role, serine/threonine-protein kinase component of the chromosomal passenger complex (CPC), a complex that acts as a key regulator of mitosis. The CPC complex has essential functions at the centromere in ensuring correct chromosome alignment and segregation and is required for chromatin-induced microtubule stabilization and spindle assembly. Involved in the bipolar attachment of spindle microtubules to kinetochores and is a key regulator for the onset of cytokinesis during mitosis. Required for central/midzone spindle assembly and cleavage furrow formation. Key component of the cytokinesis checkpoint, a process required to delay abscission to prevent both premature resolution of intercellular chromosome bridges and accumulation of DNA damage: phosphorylates CHMP4C, leading to retain abscission-competent VPS4 (VPS4A and/or VPS4B) at the midbody ring until abscission checkpoint signaling is terminated at late cytokinesis. AURKB phosphorylates the CPC complex subunits BIRC5/survivin, CDCA8/borealin and INCENP. Phosphorylation of INCENP leads to increased AURKB activity. Other known AURKB substrates involved in centromeric functions and mitosis are CENPA, DES/desmin, GPAF, KIF2C, NSUN2, RACGAP1, SEPTIN1, VIM/vimentin, HASPIN, and histone H3. A positive feedback loop involving HASPIN and AURKB contributes to localization of CPC to centromeres. Phosphorylation of VIM controls vimentin filament segregation in cytokinetic process, whereas histone H3 is phosphorylated at 'Ser-10' and 'Ser-28' during mitosis (H3S10ph and H3S28ph, respectively). AURKB is also required for kinetochore localization of BUB1 and SGO1. Phosphorylation of p53/TP53 negatively regulates its transcriptional activity. Key regulator of active promoters in resting B- and T-lymphocytes: acts by mediating phosphorylation of H3S28ph at active promoters in resting B-cells, inhibiting RNF2/RING1B-mediated ubiquitination of histone H2A and enhancing binding and activity of the USP16 deubiquitinase at transcribed genes. Acts as an inhibitor of CGAS during mitosis: catalyzes phosphorylation of the N-terminus of CGAS during the G2-M transition, blocking CGAS liquid phase separation and activation, and thereby preventing CGAS-induced autoimmunity. Phosphorylates KRT5 during anaphase and telophase. Phosphorylates ATXN10 which promotes phosphorylation of ATXN10 by PLK1 and may play a role in the regulation of cytokinesis and stimulating the proteasomal degradation of ATXN10. The sequence is that of Aurora kinase B (AURKB) from Homo sapiens (Human).